The sequence spans 430 residues: MSLKTPKGTTDLNPDDALVYEDLIDRTKNIFKLHGAVPIDTPVFELKSILLNKYGEDTKLIYDLKNNGGEECALRYDLTVPFSRYMSMNKLKKIKRYQIGKVYRRDQPSVVQGRWREFLQADFDIAGESLPMMADSELVCCMNRLLKTYNIGDFVIRVSDKRILYGIFEVCEIPNNLFATVSSSIDKLDKIAVNDINKELKLKGLTDKQIINLNIYIQKSGTVDVLDFLRENDVYKKCSEAVDDLCKLYEYCKIMKCSDHLIIDLSLARGLDYYTGMIIEGKYLNKNIGSVAGGGRYDNLIGSLENSSYTNTYNVPCAGFSIGLSRIFSCIQKPKVNTNVKVFISASGKLLLEERLKIQSILWEANISLETFYNKRNNPGEHKKYCVKHGIKYLIVVKEEQYNKGFVTVIEVNTNLENVIMIDNLPSHLQ.

Belongs to the class-II aminoacyl-tRNA synthetase family.

It localises to the cytoplasm. The enzyme catalyses tRNA(His) + L-histidine + ATP = L-histidyl-tRNA(His) + AMP + diphosphate + H(+). This is Probable histidine--tRNA ligase, cytoplasmic from Vairimorpha ceranae (strain BRL01) (Microsporidian parasite).